The sequence spans 398 residues: Odorant receptor 59b (398 aa).

Over 1 to 46 (MAVFKLIKPAPLTEKVQSRQGNIYLYRAMWLIGWIPPKEGVLRYVY) the chain is Cytoplasmic. Residues 47-67 (LFWTCVPFAFGVFYLPVGFII) traverse the membrane as a helical segment. Topologically, residues 68 to 84 (SYVQEFKNFTPGEFLTS) are extracellular. The chain crosses the membrane as a helical span at residues 85 to 105 (LQVCINVYGASVKSTITYLFL). Residues 106–141 (WRLRKTEILLDSLDKRLANDSDRERIHNMVARCNYA) are Cytoplasmic-facing. The helical transmembrane segment at 142–162 (FLIYSFIYCGYAGSTFLSYAL) threads the bilayer. Residues 163–179 (SGRPPWSVYNPFIDWRD) lie on the Extracellular side of the membrane. The chain crosses the membrane as a helical span at residues 180–200 (GMGSLWIQAIFEYITMSFAVL). Topologically, residues 201–269 (QDQLSDTYPL…DMIRPMISRT (69 aa)) are cytoplasmic. Residues 270–290 (IFVQFALIGSVLGLTLVNVFF) form a helical membrane-spanning segment. Residues 291-293 (FSN) are Extracellular-facing. The chain crosses the membrane as a helical span at residues 294–314 (FWKGVASLLFVITILLQTFPF). Residues 315–348 (CYTCNMLIDDAQDLSNEIFQSNWVDAEPRYKATL) lie on the Cytoplasmic side of the membrane. Residues 349 to 369 (VLFMHHVQQPIIFIAGGIFPI) traverse the membrane as a helical segment. The Extracellular segment spans residues 370 to 398 (SMNSNITVAKFAFSIITIVRQMNLAEQFQ). Asparagine 374 is a glycosylation site (N-linked (GlcNAc...) asparagine).

Belongs to the insect chemoreceptor superfamily. Heteromeric odorant receptor channel (TC 1.A.69) family. Or2a subfamily. Interacts with Orco. Complexes exist early in the endomembrane system in olfactory sensory neurons (OSNs), coupling these complexes to the conserved ciliary trafficking pathway. In terms of tissue distribution, expressed in olfactory sensory neurons in the antenna.

It is found in the cell membrane. Its function is as follows. Odorant receptor which mediates acceptance or avoidance behavior, depending on its substrates. The odorant receptor repertoire encodes a large collection of odor stimuli that vary widely in identity, intensity, and duration. Forms a complex with Orco to form odorant-sensing units, providing sensitive and prolonged odorant signaling and calcium permeability. Also plays a role in the response to N,N-Diethyl-meta-toluamide (DEET), the most widely used insect repellent worldwide. The polypeptide is Odorant receptor 59b (Or59b) (Drosophila melanogaster (Fruit fly)).